We begin with the raw amino-acid sequence, 21 residues long: Fibrinogen beta chain (21 aa).

Gln-1 carries the post-translational modification Pyrrolidone carboxylic acid. Positions 1–11 are enriched in acidic residues; sequence QPSYDYDEEED. Residues 1-21 form a disordered region; sequence QPSYDYDEEEDDRAKLRLDAR. Tyr-6 carries the post-translational modification Sulfotyrosine. The segment covering 12–21 has biased composition (basic and acidic residues); it reads DRAKLRLDAR.

As to quaternary structure, heterohexamer; disulfide linked. Contains 2 sets of 3 non-identical chains (alpha, beta and gamma). The 2 heterotrimers are in head to head conformation with the N-termini in a small central domain. In terms of processing, conversion of fibrinogen to fibrin is triggered by thrombin, which cleaves fibrinopeptides A and B from alpha and beta chains, and thus exposes the N-terminal polymerization sites responsible for the formation of the soft clot.

It localises to the secreted. Functionally, cleaved by the protease thrombin to yield monomers which, together with fibrinogen alpha (FGA) and fibrinogen gamma (FGG), polymerize to form an insoluble fibrin matrix. Fibrin has a major function in hemostasis as one of the primary components of blood clots. In addition, functions during the early stages of wound repair to stabilize the lesion and guide cell migration during re-epithelialization. Was originally thought to be essential for platelet aggregation, based on in vitro studies using anticoagulated blood. However subsequent studies have shown that it is not absolutely required for thrombus formation in vivo. Enhances expression of SELP in activated platelets. Maternal fibrinogen is essential for successful pregnancy. Fibrin deposition is also associated with infection, where it protects against IFNG-mediated hemorrhage. May also facilitate the antibacterial immune response via both innate and T-cell mediated pathways. This is Fibrinogen beta chain (FGB) from Antilocapra americana (Pronghorn).